The primary structure comprises 127 residues: Aspartate 1-decarboxylase (127 aa).

Ser25 acts as the Schiff-base intermediate with substrate; via pyruvic acid in catalysis. Ser25 carries the post-translational modification Pyruvic acid (Ser). Thr57 contributes to the substrate binding site. Catalysis depends on Tyr58, which acts as the Proton donor. A substrate-binding site is contributed by Gly73–Ala75.

The protein belongs to the PanD family. Heterooctamer of four alpha and four beta subunits. The cofactor is pyruvate. In terms of processing, is synthesized initially as an inactive proenzyme, which is activated by self-cleavage at a specific serine bond to produce a beta-subunit with a hydroxyl group at its C-terminus and an alpha-subunit with a pyruvoyl group at its N-terminus.

It localises to the cytoplasm. It carries out the reaction L-aspartate + H(+) = beta-alanine + CO2. The protein operates within cofactor biosynthesis; (R)-pantothenate biosynthesis; beta-alanine from L-aspartate: step 1/1. Functionally, catalyzes the pyruvoyl-dependent decarboxylation of aspartate to produce beta-alanine. This Polaromonas naphthalenivorans (strain CJ2) protein is Aspartate 1-decarboxylase.